The following is a 207-amino-acid chain: Transcriptional regulator YqjI (207 aa).

Residues 1 to 40 are compositionally biased toward basic and acidic residues; sequence MSHHHEGCCKHEGQPRHEGCCKGEKSEHEHCGHGHQHEHG. The segment at 1–46 is disordered; the sequence is MSHHHEGCCKHEGQPRHEGCCKGEKSEHEHCGHGHQHEHGQCCGGR.

In terms of assembly, oligomer (probable predominant form) and monomer.

Its activity is regulated as follows. Divalent metals such as nickel and iron have a similar negative effect on YqjI DNA-binding activity. Represses the expression of YqjH which is involved in iron homeostasis under excess nickel conditions. Also represses its own expression. This is Transcriptional regulator YqjI (yqjI) from Escherichia coli (strain K12).